Reading from the N-terminus, the 211-residue chain is Glutathione S-transferase class-mu 28 kDa isozyme (211 aa).

Residue Ala-2 is modified to N-acetylalanine. Residues 4-86 (EHIKVIYFDG…YMAKKHHMMG (83 aa)) enclose the GST N-terminal domain. Glutathione is bound by residues Tyr-10, 10 to 11 (YF), Arg-16, 41 to 45 (WPKIK), Leu-53, 55 to 56 (AV), and 70 to 71 (ES). The GST C-terminal domain occupies 88–211 (TDEEYYSVEK…YLSNRPATPF (124 aa)).

The protein belongs to the GST superfamily. Mu family. Homodimer. In terms of tissue distribution, in the adult, expressed in excretory epithelial cells but absent from the caecal epithelium and flame cells. Also expressed in the tegument and its extensions into the parenchyma. In the schistosomulum, expressed in the tegument and associated structures. Not expressed in digestive tract, reproductive organs or muscles (at protein level).

The enzyme catalyses RX + glutathione = an S-substituted glutathione + a halide anion + H(+). Functionally, conjugation of reduced glutathione to a wide number of exogenous and endogenous hydrophobic electrophiles. Its function is as follows. GST isoenzymes appear to play a central role in the parasite detoxification system. Other functions are also suspected including a role in increasing the solubility of haematin in the parasite gut. The protein is Glutathione S-transferase class-mu 28 kDa isozyme (GST28) of Schistosoma mansoni (Blood fluke).